A 250-amino-acid polypeptide reads, in one-letter code: Endonuclease NucS (250 aa).

The protein belongs to the NucS endonuclease family.

It localises to the cytoplasm. Cleaves both 3' and 5' ssDNA extremities of branched DNA structures. In Sulfolobus acidocaldarius (strain ATCC 33909 / DSM 639 / JCM 8929 / NBRC 15157 / NCIMB 11770), this protein is Endonuclease NucS.